A 465-amino-acid chain; its full sequence is MNIGKIVQIMGAVVDVEFASEALPEIYSAVKVTVPEQKIDLTLEVAQHLGNNTVRCVAMSSTDGLQRGMAALNTGAPITVPVGPATLGRIFNVLGKAIDNGEEVHTDTSYPIHRPAPAFVDQDPSTVMLETGIKVIDLLAPYSKGGKIGLFGGAGVGKTVLIQELINNIAMEHGGLSVFAGVGERTREGNDLWNEMRESGVIDKMAMVFGQMNEPPGARLRVGLTGLTMAEYFRDVQNQDVLLFIDNIFRFTQAGSEVSALLGRMPSAVGYQPTLATEMGALQERITSTRNGSITSVQAIYVPADDLTDPAPATAFAHLDATTVLNRAISEKGIYPAVDPLDSNSRILSPQIIGEEHYKVARDVQQILQKYKELQDIIAILGMDELSEDEKLVVSRARRIERFLSQPFHVAEVFTGSPGKYVPIKETIRGFKEIVEGKHDNLPEAAFHMVGTIEEAIEKAKALGA.

Residue 152-159 participates in ATP binding; the sequence is GGAGVGKT.

The protein belongs to the ATPase alpha/beta chains family. In terms of assembly, F-type ATPases have 2 components, CF(1) - the catalytic core - and CF(0) - the membrane proton channel. CF(1) has five subunits: alpha(3), beta(3), gamma(1), delta(1), epsilon(1). CF(0) has three main subunits: a(1), b(2) and c(9-12). The alpha and beta chains form an alternating ring which encloses part of the gamma chain. CF(1) is attached to CF(0) by a central stalk formed by the gamma and epsilon chains, while a peripheral stalk is formed by the delta and b chains.

Its subcellular location is the cell membrane. It catalyses the reaction ATP + H2O + 4 H(+)(in) = ADP + phosphate + 5 H(+)(out). Its function is as follows. Produces ATP from ADP in the presence of a proton gradient across the membrane. The catalytic sites are hosted primarily by the beta subunits. This Desulfitobacterium hafniense (strain Y51) protein is ATP synthase subunit beta.